We begin with the raw amino-acid sequence, 123 residues long: Large ribosomal subunit protein bL12 (123 aa).

This sequence belongs to the bacterial ribosomal protein bL12 family. In terms of assembly, homodimer. Part of the ribosomal stalk of the 50S ribosomal subunit. Forms a multimeric L10(L12)X complex, where L10 forms an elongated spine to which 2 to 4 L12 dimers bind in a sequential fashion. Binds GTP-bound translation factors.

Its function is as follows. Forms part of the ribosomal stalk which helps the ribosome interact with GTP-bound translation factors. Is thus essential for accurate translation. The sequence is that of Large ribosomal subunit protein bL12 from Neisseria meningitidis serogroup C (strain 053442).